A 128-amino-acid polypeptide reads, in one-letter code: Glycine cleavage system H protein (128 aa).

Residues 24–106 (VFCVGITDHA…YDEGWLFRIR (83 aa)) form the Lipoyl-binding domain. At Lys-65 the chain carries N6-lipoyllysine.

This sequence belongs to the GcvH family. The glycine cleavage system is composed of four proteins: P, T, L and H. The cofactor is (R)-lipoate.

Its function is as follows. The glycine cleavage system catalyzes the degradation of glycine. The H protein shuttles the methylamine group of glycine from the P protein to the T protein. The polypeptide is Glycine cleavage system H protein (Edwardsiella ictaluri (strain 93-146)).